The primary structure comprises 701 residues: Glycine--tRNA ligase beta subunit (701 aa).

The protein belongs to the class-II aminoacyl-tRNA synthetase family. In terms of assembly, tetramer of two alpha and two beta subunits.

It is found in the cytoplasm. It carries out the reaction tRNA(Gly) + glycine + ATP = glycyl-tRNA(Gly) + AMP + diphosphate. The sequence is that of Glycine--tRNA ligase beta subunit from Helicobacter pylori (strain HPAG1).